The following is a 297-amino-acid chain: Cell division protein FtsX (297 aa).

Over 1 to 21 the chain is Cytoplasmic; it reads MRFGFLLNEVLTGFRRNVTMT. The helical transmembrane segment at 22–42 threads the bilayer; the sequence is IAMILTTAISVGLFGGGMLVV. Residues 43–171 lie on the Extracellular side of the membrane; that stretch reads RLADSSRAIY…LFAVLDGLSN (129 aa). The helical transmembrane segment at 172-192 threads the bilayer; it reads AAFAVALVQAIGAILLIANMV. Topologically, residues 193–219 are cytoplasmic; that stretch reads QVAAYTRRTEIGIMRLVGASRWYTQLP. Residues 220–240 form a helical membrane-spanning segment; it reads FLVEAMLAATMGVGIAVAGLM. Topologically, residues 241 to 267 are extracellular; sequence VVRALFLENALNQFYQANLIAKVDYAD. The chain crosses the membrane as a helical span at residues 268 to 288; sequence ILFITPWLLLLGVAMSGLTAY. Residues 289–297 are Cytoplasmic-facing; it reads LTLRLYVRR.

Belongs to the ABC-4 integral membrane protein family. FtsX subfamily. As to quaternary structure, forms a membrane-associated complex with FtsE.

Its subcellular location is the cell membrane. Its function is as follows. Part of the ABC transporter FtsEX involved in cellular division. In Mycobacterium tuberculosis (strain ATCC 25177 / H37Ra), this protein is Cell division protein FtsX.